The sequence spans 355 residues: Uroporphyrinogen decarboxylase (355 aa).

Substrate is bound by residues 27 to 31 (RQAGR), D77, Y154, T209, and H327.

The protein belongs to the uroporphyrinogen decarboxylase family. Homodimer.

The protein resides in the cytoplasm. It catalyses the reaction uroporphyrinogen III + 4 H(+) = coproporphyrinogen III + 4 CO2. Its pathway is porphyrin-containing compound metabolism; protoporphyrin-IX biosynthesis; coproporphyrinogen-III from 5-aminolevulinate: step 4/4. In terms of biological role, catalyzes the decarboxylation of four acetate groups of uroporphyrinogen-III to yield coproporphyrinogen-III. The protein is Uroporphyrinogen decarboxylase of Yersinia pseudotuberculosis serotype O:1b (strain IP 31758).